The primary structure comprises 417 residues: Proteasome-activating nucleotidase (417 aa).

Residues 24–78 (SKYLLDRVKQLEERNVRLKEEYRKIELEKKSVENKKVQYEREIRKLTSELDRLKT) adopt a coiled-coil conformation. ATP-binding positions include 203 to 208 (GTGKTL) and His342. The interval 415–417 (MFA) is docks into pockets in the proteasome alpha-ring to cause gate opening.

The protein belongs to the AAA ATPase family. As to quaternary structure, homohexamer. The hexameric complex has a two-ring architecture resembling a top hat that caps the 20S proteasome core at one or both ends. Upon ATP-binding, the C-terminus of PAN interacts with the alpha-rings of the proteasome core by binding to the intersubunit pockets.

The protein resides in the cytoplasm. Its function is as follows. ATPase which is responsible for recognizing, binding, unfolding and translocation of substrate proteins into the archaeal 20S proteasome core particle. Is essential for opening the gate of the 20S proteasome via an interaction with its C-terminus, thereby allowing substrate entry and access to the site of proteolysis. Thus, the C-termini of the proteasomal ATPase function like a 'key in a lock' to induce gate opening and therefore regulate proteolysis. Unfolding activity requires energy from ATP hydrolysis, whereas ATP binding alone promotes ATPase-20S proteasome association which triggers gate opening, and supports translocation of unfolded substrates. In Methanocella arvoryzae (strain DSM 22066 / NBRC 105507 / MRE50), this protein is Proteasome-activating nucleotidase.